We begin with the raw amino-acid sequence, 384 residues long: MSEQLVTPENVTTKDGKINLLDLNRQQMREFFKDLGEKPFRADQVMKWMYHYCCDNFDEMTDINKVLRGKLKEVAEIRAPEVVEEQRSSDGTIKWAIAVGDQRVETVYIPEDDRATLCVSSQVGCALECKFCSTAQQGFNRNLRVSEIIGQVWRAAKIVGAAKVTGQRPITNVVMMGMGEPLLNLNNVVPAMEIMLDDFGFGLSKRRVTLSTSGVVPALDKLGDMIDVALAISLHAPNDEIRDEIVPINKKYNIETFLAAVRRYLEKSNANQGRVTIEYVMLDHVNDGTEHAHQLAELLKDTPCKINLIPWNPFPAAPYGRSSNSRIDRFSKVLMSYGFTTIVRKTRGDDIDAACGQLAGDVIDRTKRTLRKRMQGEAIDIKAV.

The active-site Proton acceptor is the glutamate 105. A Radical SAM core domain is found at 111–350 (EDDRATLCVS…TIVRKTRGDD (240 aa)). Cysteine 118 and cysteine 355 are joined by a disulfide. Positions 125, 129, and 132 each coordinate [4Fe-4S] cluster. S-adenosyl-L-methionine-binding positions include 179-180 (GE), serine 211, 233-235 (SLH), and asparagine 312. Cysteine 355 (S-methylcysteine intermediate) is an active-site residue.

It belongs to the radical SAM superfamily. RlmN family. [4Fe-4S] cluster is required as a cofactor.

The protein resides in the cytoplasm. The catalysed reaction is adenosine(2503) in 23S rRNA + 2 reduced [2Fe-2S]-[ferredoxin] + 2 S-adenosyl-L-methionine = 2-methyladenosine(2503) in 23S rRNA + 5'-deoxyadenosine + L-methionine + 2 oxidized [2Fe-2S]-[ferredoxin] + S-adenosyl-L-homocysteine. It carries out the reaction adenosine(37) in tRNA + 2 reduced [2Fe-2S]-[ferredoxin] + 2 S-adenosyl-L-methionine = 2-methyladenosine(37) in tRNA + 5'-deoxyadenosine + L-methionine + 2 oxidized [2Fe-2S]-[ferredoxin] + S-adenosyl-L-homocysteine. Its function is as follows. Specifically methylates position 2 of adenine 2503 in 23S rRNA and position 2 of adenine 37 in tRNAs. m2A2503 modification seems to play a crucial role in the proofreading step occurring at the peptidyl transferase center and thus would serve to optimize ribosomal fidelity. This chain is Dual-specificity RNA methyltransferase RlmN, found in Escherichia coli O157:H7.